The sequence spans 362 residues: 3-dehydroquinate synthase (362 aa).

NAD(+) is bound by residues 71 to 76, 105 to 109, 129 to 130, Lys-142, and Lys-151; these read DGEQNK, GVIGD, and TT. Glu-184, His-247, and His-264 together coordinate Zn(2+).

Belongs to the sugar phosphate cyclases superfamily. Dehydroquinate synthase family. Co(2+) is required as a cofactor. The cofactor is Zn(2+). Requires NAD(+) as cofactor.

The protein localises to the cytoplasm. The catalysed reaction is 7-phospho-2-dehydro-3-deoxy-D-arabino-heptonate = 3-dehydroquinate + phosphate. Its pathway is metabolic intermediate biosynthesis; chorismate biosynthesis; chorismate from D-erythrose 4-phosphate and phosphoenolpyruvate: step 2/7. In terms of biological role, catalyzes the conversion of 3-deoxy-D-arabino-heptulosonate 7-phosphate (DAHP) to dehydroquinate (DHQ). This chain is 3-dehydroquinate synthase, found in Blochmanniella pennsylvanica (strain BPEN).